The following is a 193-amino-acid chain: Large ribosomal subunit protein uL18 (193 aa).

This sequence belongs to the universal ribosomal protein uL18 family. As to quaternary structure, part of the 50S ribosomal subunit. Contacts the 5S and 23S rRNAs.

Functionally, this is one of the proteins that bind and probably mediate the attachment of the 5S RNA into the large ribosomal subunit, where it forms part of the central protuberance. This is Large ribosomal subunit protein uL18 from Methanobrevibacter smithii (strain ATCC 35061 / DSM 861 / OCM 144 / PS).